Consider the following 287-residue polypeptide: Viomycin phosphotransferase (287 aa).

Residue D190 is the Proton acceptor of the active site.

The protein belongs to the aminoglycoside phosphotransferase family.

It carries out the reaction viomycin + ATP = O-phosphoviomycin + ADP + H(+). Functionally, the aminoglycoside phosphotransferases achieve inactivation of their antibiotic substrates by phosphorylation. This is Viomycin phosphotransferase (vph) from Streptomyces vinaceus.